Reading from the N-terminus, the 396-residue chain is Phosphoglycerate kinase (396 aa).

Substrate-binding positions include 21–23 (DFN), arginine 36, 59–62 (HLGK), arginine 119, and arginine 156. Residues lysine 206, glutamate 325, and 352 to 355 (GGDS) contribute to the ATP site.

The protein belongs to the phosphoglycerate kinase family. Monomer.

The protein resides in the cytoplasm. The catalysed reaction is (2R)-3-phosphoglycerate + ATP = (2R)-3-phospho-glyceroyl phosphate + ADP. Its pathway is carbohydrate degradation; glycolysis; pyruvate from D-glyceraldehyde 3-phosphate: step 2/5. This Staphylococcus haemolyticus (strain JCSC1435) protein is Phosphoglycerate kinase.